Consider the following 116-residue polypeptide: Ribonuclease P protein component (116 aa).

The protein belongs to the RnpA family. Consists of a catalytic RNA component (M1 or rnpB) and a protein subunit.

The enzyme catalyses Endonucleolytic cleavage of RNA, removing 5'-extranucleotides from tRNA precursor.. Functionally, RNaseP catalyzes the removal of the 5'-leader sequence from pre-tRNA to produce the mature 5'-terminus. It can also cleave other RNA substrates such as 4.5S RNA. The protein component plays an auxiliary but essential role in vivo by binding to the 5'-leader sequence and broadening the substrate specificity of the ribozyme. In Mycobacterium bovis (strain ATCC BAA-935 / AF2122/97), this protein is Ribonuclease P protein component.